The following is a 550-amino-acid chain: Efflux pump DEP3 (550 aa).

A disordered region spans residues 1–33; the sequence is MSEQSTLAGPYTEKPGVESQNPTGDGKASFDET. Helical transmembrane passes span 44 to 64, 78 to 98, 109 to 129, 139 to 159, 172 to 192, 199 to 219, 242 to 262, 268 to 288, 319 to 339, 351 to 371, and 373 to 393; these read AIAY…NTIV, LELI…ILLW, WVYI…GAAP, VIAG…VSVL, STVV…AFAA, WGFY…MILF, AVIF…GGVV, GTII…IVLL, FLAS…FQFI, LLPL…LMPK, and GLIP…SALM. Residue asparagine 399 is glycosylated (N-linked (GlcNAc...) asparagine). 3 helical membrane passes run 410 to 430, 439 to 459, and 515 to 535; these read ILVG…VQSL, AVGA…AICG, and SIWA…WPLF.

Belongs to the major facilitator superfamily. TCR/Tet family.

It localises to the cell membrane. Functionally, efflux pump; part of the gene cluster that mediates the biosynthesis of depudecin, a highly oxidized eleven-carbon linear polyketide that acts as a histone deacetylase (HDAC) inhibitor and makes a small contribution to pathogenesis. Is presumed either to be responsible for exporting depudecin, to provide self-protection, or both. This Fusarium langsethiae protein is Efflux pump DEP3.